A 520-amino-acid polypeptide reads, in one-letter code: GMP synthase [glutamine-hydrolyzing] (520 aa).

Residues 9–202 enclose the Glutamine amidotransferase type-1 domain; it reads TVLIVDFGSQ…IHNIAGIKGD (194 aa). Catalysis depends on Cys86, which acts as the Nucleophile. Residues His176 and Glu178 contribute to the active site. One can recognise a GMPS ATP-PPase domain in the interval 203–395; sequence WSMSAYRAKA…LGLPDSFIGR (193 aa). ATP is bound at residue 230–236; the sequence is SGGVDSS.

Homodimer.

It catalyses the reaction XMP + L-glutamine + ATP + H2O = GMP + L-glutamate + AMP + diphosphate + 2 H(+). It functions in the pathway purine metabolism; GMP biosynthesis; GMP from XMP (L-Gln route): step 1/1. In terms of biological role, catalyzes the synthesis of GMP from XMP. The protein is GMP synthase [glutamine-hydrolyzing] of Rhizobium rhizogenes (strain K84 / ATCC BAA-868) (Agrobacterium radiobacter).